We begin with the raw amino-acid sequence, 469 residues long: Acetyl-CoA decarbonylase/synthase complex subunit beta 1 (469 aa).

Residues C189, C192, C278, and C280 each contribute to the [Ni-Fe-S] cluster site.

This sequence belongs to the CdhC family. As to quaternary structure, monomer. The ACDS complex is made up of alpha, epsilon, beta, gamma and delta chains with a probable stoichiometry of (alpha(2)epsilon(2))(4)-beta(8)-(gamma(1)delta(1))(8) (Potential). Requires [Ni-Fe-S] cluster as cofactor.

The catalysed reaction is Co(I)-[corrinoid Fe-S protein] + acetyl-CoA + H(+) = methyl-Co(III)-[corrinoid Fe-S protein] + CO + CoA. It participates in one-carbon metabolism; methanogenesis from acetate. In terms of biological role, part of a complex that catalyzes the reversible cleavage of acetyl-CoA, allowing growth on acetate as sole source of carbon and energy. The alpha-epsilon complex generates CO from CO(2), while the beta subunit (this protein) combines the CO with CoA and a methyl group to form acetyl-CoA. The methyl group, which is incorporated into acetyl-CoA, is transferred to the beta subunit by a corrinoid iron-sulfur protein (the gamma-delta complex). The polypeptide is Acetyl-CoA decarbonylase/synthase complex subunit beta 1 (cdhC1) (Methanosarcina mazei (strain ATCC BAA-159 / DSM 3647 / Goe1 / Go1 / JCM 11833 / OCM 88) (Methanosarcina frisia)).